A 371-amino-acid polypeptide reads, in one-letter code: MRNAGGDKPFSTPVLLREMGLKTHVDDDPKTKAYRLIGYAAVTFSTVSVICFCVTMPVVFTYVQSVKRQMSHEMATCNVNARQIFDDVAALRAGFPFAQAGNRTARQAGYDVHPSKPTPVGYSGGDAAAAEVKGNSPAAAYEDKPFVAVGVEEGPHTATTGSDSEGTCHDCCLPGPPGPPGPPGRPGPNGKAGANGLNGNPGRPPEAPCEPVTPPPCPPCPAGPKGAPGQAGYPGADGQPGSQGDNGEKGSDGAAGEKGRPGPLGKIGEPGATGETGENAENSEPTPGPQGPPGAIGPVGSRGTPGHPGEDGEAGAPGAPGENGTDGENGEDGVPGVPGHDGKAGRAGERGICPKYCAKDGGIFFEDGTRR.

Residues 38-60 (GYAAVTFSTVSVICFCVTMPVVF) traverse the membrane as a helical segment. Disordered stretches follow at residues 108–127 (AGYD…GGDA) and 153–371 (EGPH…GTRR). Positions 174–186 (PGPPGPPGPPGRP) are enriched in pro residues. Residues 188–201 (PNGKAGANGLNGNP) show a composition bias toward low complexity. Positions 202 to 222 (GRPPEAPCEPVTPPPCPPCPA) are enriched in pro residues. Low complexity predominate over residues 223-240 (GPKGAPGQAGYPGADGQP). The Collagen-like domain maps to 223-280 (GPKGAPGQAGYPGADGQPGSQGDNGEKGSDGAAGEKGRPGPLGKIGEPGATGETGENA). The segment covering 246–260 (NGEKGSDGAAGEKGR) has biased composition (basic and acidic residues). Low complexity predominate over residues 314–323 (AGAPGAPGEN). Residues 340–349 (HDGKAGRAGE) are compositionally biased toward basic and acidic residues.

Belongs to the cuticular collagen family. Collagen polypeptide chains are complexed within the cuticle by disulfide bonds and other types of covalent cross-links.

It localises to the membrane. The protein resides in the nucleus. In terms of biological role, probable cuticular collagen-like protein. Nematode cuticles are composed largely of collagen-like proteins. The cuticle functions both as an exoskeleton and as a barrier to protect the worm from its environment. Acts downstream of the Wnt signaling pathway, perhaps in the formation of the adult cuticle. The polypeptide is Cuticle collagen 71 (Caenorhabditis elegans).